Reading from the N-terminus, the 506-residue chain is AMP phosphorylase (506 aa).

Residues Gly167, 193 to 198 (SRAITG), and Thr202 contribute to the AMP site. The Proton donor role is filled by Asp255. AMP is bound by residues Ser263 and Lys287.

It belongs to the thymidine/pyrimidine-nucleoside phosphorylase family. Type 2 subfamily.

It catalyses the reaction AMP + phosphate = alpha-D-ribose 1,5-bisphosphate + adenine. The enzyme catalyses CMP + phosphate = cytosine + alpha-D-ribose 1,5-bisphosphate. It carries out the reaction UMP + phosphate = alpha-D-ribose 1,5-bisphosphate + uracil. Functionally, catalyzes the conversion of AMP and phosphate to adenine and ribose 1,5-bisphosphate (R15P). Exhibits phosphorylase activity toward CMP and UMP in addition to AMP. Functions in an archaeal AMP degradation pathway, together with R15P isomerase and RubisCO. This chain is AMP phosphorylase, found in Methanosarcina barkeri (strain Fusaro / DSM 804).